Consider the following 144-residue polypeptide: 3-dehydroquinate dehydratase (144 aa).

Tyr-22 acts as the Proton acceptor in catalysis. Substrate is bound by residues Asn-73, His-79, and Asp-86. The active-site Proton donor is the His-99. Residues 100–101 (IS) and Arg-110 contribute to the substrate site.

This sequence belongs to the type-II 3-dehydroquinase family. Homododecamer.

It carries out the reaction 3-dehydroquinate = 3-dehydroshikimate + H2O. It participates in metabolic intermediate biosynthesis; chorismate biosynthesis; chorismate from D-erythrose 4-phosphate and phosphoenolpyruvate: step 3/7. In terms of biological role, catalyzes a trans-dehydration via an enolate intermediate. The sequence is that of 3-dehydroquinate dehydratase from Clostridium acetobutylicum (strain ATCC 824 / DSM 792 / JCM 1419 / IAM 19013 / LMG 5710 / NBRC 13948 / NRRL B-527 / VKM B-1787 / 2291 / W).